We begin with the raw amino-acid sequence, 277 residues long: Protein CMSS1 (277 aa).

Residues 1–14 show a composition bias toward acidic residues; that stretch reads MADDLGNEWWEEPA. The disordered stretch occupies residues 1-91; that stretch reads MADDLGNEWW…QHAPTAGTPE (91 aa). Residues 24–34 are compositionally biased toward basic and acidic residues; sequence EEVKESEESKG. A compositionally biased stretch (basic residues) spans 35-52; it reads NKKKKIPSGKTQVKRKKE. A compositionally biased stretch (basic and acidic residues) spans 53-66; the sequence is VKVSQEAEKEDSAP.

The protein belongs to the CMS1 family.

The protein is Protein CMSS1 (cmss1) of Xenopus laevis (African clawed frog).